We begin with the raw amino-acid sequence, 458 residues long: Probable asparagine--tRNA ligase, cytoplasmic (458 aa).

Belongs to the class-II aminoacyl-tRNA synthetase family.

It is found in the cytoplasm. It catalyses the reaction tRNA(Asn) + L-asparagine + ATP = L-asparaginyl-tRNA(Asn) + AMP + diphosphate + H(+). The polypeptide is Probable asparagine--tRNA ligase, cytoplasmic (Enterocytozoon bieneusi (strain H348) (Microsporidian parasite)).